The primary structure comprises 398 residues: Dual specificity mitogen-activated protein kinase kinase 2 (398 aa).

The tract at residues 1–29 (MPAKRKPVLPALTITPSPAEGPGPGGSAE) is disordered. The region spanning 70-367 (FERISELGAG…LKMLMNHTFI (298 aa)) is the Protein kinase domain. Residues 76–84 (LGAGNGGVV) and K99 contribute to the ATP site. D192 functions as the Proton acceptor in the catalytic mechanism. Residues S220 and S224 each carry the phosphoserine; by RAF modification.

It belongs to the protein kinase superfamily. STE Ser/Thr protein kinase family. MAP kinase kinase subfamily. In terms of processing, activated by phosphorylation on Ser/Thr catalyzed by MAP kinase kinase kinases (RAF).

The enzyme catalyses L-seryl-[protein] + ATP = O-phospho-L-seryl-[protein] + ADP + H(+). It carries out the reaction L-threonyl-[protein] + ATP = O-phospho-L-threonyl-[protein] + ADP + H(+). It catalyses the reaction L-tyrosyl-[protein] + ATP = O-phospho-L-tyrosyl-[protein] + ADP + H(+). Catalyzes the concomitant phosphorylation of a threonine and a tyrosine residue in a Thr-Glu-Tyr sequence located in MAP kinases. Activates the ERK1 and ERK2 MAP kinases. In Gallus gallus (Chicken), this protein is Dual specificity mitogen-activated protein kinase kinase 2 (MAP2K2).